The chain runs to 1791 residues: Brefeldin A-inhibited guanine nucleotide-exchange protein 2 (1791 aa).

The residue at position 1 (Met1) is an N-acetylmethionine. Residues 2–224 (QESQTKSMFV…KPQSPVIQAT (223 aa)) are DCB; DCB:DCB domain and DCB:HUS domain interaction. Disordered stretches follow at residues 208–292 (LEKP…DNGA) and 311–350 (AAEK…IADD). Phosphoserine occurs at positions 214, 218, and 227. Residues 214-225 (SKPQSPVIQATA) are compositionally biased toward polar residues. Residues 233–243 (LKQSQAQSKPT) are compositionally biased toward polar residues. A Phosphothreonine modification is found at Thr244. The segment covering 244–257 (TPEKTELPNGDHAR) has biased composition (basic and acidic residues). Residue Ser277 is modified to Phosphoserine. Residues Ser355 and Ser356 each carry the phosphoserine modification. Residues 515-535 (ADAQCVVDIYVNYDCDLNAAN) form an HUS; DCB:HUS domain interaction region. Residue Ser621 is modified to Phosphoserine. A Phosphothreonine modification is found at Thr623. Ser624 bears the Phosphoserine mark. A Phosphothreonine modification is found at Thr633. One can recognise an SEC7 domain in the interval 661–792 (FNKKPKRGIQ…IIMLTTDLHS (132 aa)). Residues Ser707, Ser1518, Ser1520, Ser1521, Ser1532, Ser1535, Ser1541, and Ser1788 each carry the phosphoserine modification.

Homodimer. Interacts with ARFGEF1/BIG1; both proteins are probably part of the same or very similar macromolecular complexes. Interacts with PRKAR1A, PRKAR2A, PRKAR1B, PRKAR2B, PPP1CC, PDE3A, TNFRSF1A, MYCBP and EXOC7. Interacts with GABRB1, GABRB2 and GABRB3. In terms of processing, in vitro phosphorylated by PKA reducing its GEF activity and dephosphorylated by phosphatase PP1. As to expression, expressed in brain (at protein level).

It localises to the cytoplasm. The protein resides in the membrane. Its subcellular location is the golgi apparatus. The protein localises to the perinuclear region. It is found in the trans-Golgi network. It localises to the endosome. The protein resides in the cytoskeleton. Its subcellular location is the microtubule organizing center. The protein localises to the centrosome. It is found in the cell projection. It localises to the dendrite. The protein resides in the cytoplasmic vesicle. Its subcellular location is the synapse. Inhibited by brefeldin A. Promotes guanine-nucleotide exchange on ARF1 and ARF3 and to a lower extent on ARF5 and ARF6. Promotes the activation of ARF1/ARF5/ARF6 through replacement of GDP with GTP. Involved in the regulation of Golgi vesicular transport. Required for the integrity of the endosomal compartment. Involved in trafficking from the trans-Golgi network (TGN) to endosomes and is required for membrane association of the AP-1 complex and GGA1. Seems to be involved in recycling of the transferrin receptor from recycling endosomes to the plasma membrane. Probably is involved in the exit of GABA(A) receptors from the endoplasmic reticulum. Involved in constitutive release of tumor necrosis factor receptor 1 via exosome-like vesicles; the function seems to involve PKA and specifically PRKAR2B. Proposed to act as A kinase-anchoring protein (AKAP) and may mediate crosstalk between Arf and PKA pathways. This chain is Brefeldin A-inhibited guanine nucleotide-exchange protein 2 (Arfgef2), found in Rattus norvegicus (Rat).